The sequence spans 65 residues: MAKSKDTRITIILECNICSNNKKSNFPKSSRYTTQKNRRNTPNRLILKKFCSNCQQHTIYNEIKK.

It belongs to the bacterial ribosomal protein bL33 family.

It is found in the plastid. The protein resides in the chloroplast. The sequence is that of Large ribosomal subunit protein bL33c from Chara vulgaris (Common stonewort).